The chain runs to 302 residues: Small ribosomal subunit biogenesis GTPase RsgA (302 aa).

The 159-residue stretch at 75-233 (KNELIRPAVS…IMDTPGFSSM (159 aa)) folds into the CP-type G domain. GTP contacts are provided by residues 124 to 127 (NKKD) and 175 to 183 (GPSGVGKSS). Cys257, Cys262, His264, and Cys270 together coordinate Zn(2+).

It belongs to the TRAFAC class YlqF/YawG GTPase family. RsgA subfamily. As to quaternary structure, monomer. Associates with 30S ribosomal subunit, binds 16S rRNA. Zn(2+) is required as a cofactor.

Its subcellular location is the cytoplasm. One of several proteins that assist in the late maturation steps of the functional core of the 30S ribosomal subunit. Helps release RbfA from mature subunits. May play a role in the assembly of ribosomal proteins into the subunit. Circularly permuted GTPase that catalyzes slow GTP hydrolysis, GTPase activity is stimulated by the 30S ribosomal subunit. The chain is Small ribosomal subunit biogenesis GTPase RsgA from Agathobacter rectalis (strain ATCC 33656 / DSM 3377 / JCM 17463 / KCTC 5835 / VPI 0990) (Eubacterium rectale).